The following is a 235-amino-acid chain: Leucyl/phenylalanyl-tRNA--protein transferase (235 aa).

This sequence belongs to the L/F-transferase family.

It is found in the cytoplasm. The enzyme catalyses N-terminal L-lysyl-[protein] + L-leucyl-tRNA(Leu) = N-terminal L-leucyl-L-lysyl-[protein] + tRNA(Leu) + H(+). It catalyses the reaction N-terminal L-arginyl-[protein] + L-leucyl-tRNA(Leu) = N-terminal L-leucyl-L-arginyl-[protein] + tRNA(Leu) + H(+). It carries out the reaction L-phenylalanyl-tRNA(Phe) + an N-terminal L-alpha-aminoacyl-[protein] = an N-terminal L-phenylalanyl-L-alpha-aminoacyl-[protein] + tRNA(Phe). In terms of biological role, functions in the N-end rule pathway of protein degradation where it conjugates Leu, Phe and, less efficiently, Met from aminoacyl-tRNAs to the N-termini of proteins containing an N-terminal arginine or lysine. In Azoarcus sp. (strain BH72), this protein is Leucyl/phenylalanyl-tRNA--protein transferase.